The chain runs to 188 residues: Apolipophorin-3 (188 aa).

A signal peptide spans 1–17; that stretch reads MVAKLFVLVACIALSHA. Positions 18-22 are excised as a propeptide; the sequence is AMVRR.

The protein belongs to the insect apolipophorin-3 family. As to quaternary structure, equilibrium between a soluble monomer and a bound lipoprotein form. Apolipophorin-3 associates with lipophorin during lipid loading until each particle contains 9 or 14 molecules of apolipophorin-3. In terms of tissue distribution, expressed in fat body and secreted in hemolymph. Also expressed in ovary and testis at lower levels.

It localises to the secreted. Assists in the loading of diacylglycerol, generated from triacylglycerol stores in the fat body through the action of adipokinetic hormone, into lipophorin, the hemolymph lipoprotein. It increases the lipid carrying capacity of lipophorin by covering the expanding hydrophobic surface resulting from diacylglycerol uptake. It thus plays a critical role in the transport of lipids during flight in several species of insects. This chain is Apolipophorin-3, found in Spodoptera litura (Asian cotton leafworm).